The chain runs to 429 residues: Glutamate-1-semialdehyde 2,1-aminomutase (429 aa).

Residue Lys-265 is modified to N6-(pyridoxal phosphate)lysine.

It belongs to the class-III pyridoxal-phosphate-dependent aminotransferase family. HemL subfamily. Homodimer. Pyridoxal 5'-phosphate serves as cofactor.

It is found in the cytoplasm. It carries out the reaction (S)-4-amino-5-oxopentanoate = 5-aminolevulinate. It participates in porphyrin-containing compound metabolism; protoporphyrin-IX biosynthesis; 5-aminolevulinate from L-glutamyl-tRNA(Glu): step 2/2. The chain is Glutamate-1-semialdehyde 2,1-aminomutase from Shewanella pealeana (strain ATCC 700345 / ANG-SQ1).